We begin with the raw amino-acid sequence, 328 residues long: Glycerol-3-phosphate dehydrogenase [NAD(P)+] (328 aa).

Positions 15, 35, 51, and 107 each coordinate NADPH. Lysine 107, glycine 135, and serine 137 together coordinate sn-glycerol 3-phosphate. Alanine 139 provides a ligand contact to NADPH. Residues lysine 190, aspartate 243, serine 253, arginine 254, and asparagine 255 each coordinate sn-glycerol 3-phosphate. The active-site Proton acceptor is lysine 190. Residue arginine 254 participates in NADPH binding. NADPH-binding residues include leucine 276 and glutamate 278.

It belongs to the NAD-dependent glycerol-3-phosphate dehydrogenase family.

It is found in the cytoplasm. The enzyme catalyses sn-glycerol 3-phosphate + NAD(+) = dihydroxyacetone phosphate + NADH + H(+). It carries out the reaction sn-glycerol 3-phosphate + NADP(+) = dihydroxyacetone phosphate + NADPH + H(+). It functions in the pathway membrane lipid metabolism; glycerophospholipid metabolism. Functionally, catalyzes the reduction of the glycolytic intermediate dihydroxyacetone phosphate (DHAP) to sn-glycerol 3-phosphate (G3P), the key precursor for phospholipid synthesis. The sequence is that of Glycerol-3-phosphate dehydrogenase [NAD(P)+] from Rhodopseudomonas palustris (strain BisA53).